A 300-amino-acid chain; its full sequence is N-acetylmuramic acid 6-phosphate etherase (300 aa).

Positions 57 to 220 constitute an SIS domain; sequence ITHAFAHGGR…TSGAMIRSGK (164 aa). The Proton donor role is filled by glutamate 85. The active site involves glutamate 116.

It belongs to the GCKR-like family. MurNAc-6-P etherase subfamily. As to quaternary structure, homodimer.

The catalysed reaction is N-acetyl-D-muramate 6-phosphate + H2O = N-acetyl-D-glucosamine 6-phosphate + (R)-lactate. It functions in the pathway amino-sugar metabolism; 1,6-anhydro-N-acetylmuramate degradation. The protein operates within amino-sugar metabolism; N-acetylmuramate degradation. Its pathway is cell wall biogenesis; peptidoglycan recycling. Its function is as follows. Specifically catalyzes the cleavage of the D-lactyl ether substituent of MurNAc 6-phosphate, producing GlcNAc 6-phosphate and D-lactate. Together with AnmK, is also required for the utilization of anhydro-N-acetylmuramic acid (anhMurNAc) either imported from the medium or derived from its own cell wall murein, and thus plays a role in cell wall recycling. This chain is N-acetylmuramic acid 6-phosphate etherase, found in Vibrio vulnificus (strain CMCP6).